Consider the following 280-residue polypeptide: Elongation factor Ts (280 aa).

Residues 79–82 form an involved in Mg(2+) ion dislocation from EF-Tu region; it reads TDFV.

This sequence belongs to the EF-Ts family.

It is found in the cytoplasm. Its function is as follows. Associates with the EF-Tu.GDP complex and induces the exchange of GDP to GTP. It remains bound to the aminoacyl-tRNA.EF-Tu.GTP complex up to the GTP hydrolysis stage on the ribosome. This Vibrio cholerae serotype O1 (strain ATCC 39541 / Classical Ogawa 395 / O395) protein is Elongation factor Ts.